We begin with the raw amino-acid sequence, 106 residues long: RNA-binding protein Hfq (106 aa).

One can recognise a Sm domain in the interval 9-68 (DPYLNALRKERVPVSIYLVNGIKLQGQIESFDAFVILLRNNISQMVYKHAVSTIVPSRNI). The segment at 78-106 (EDEAGEEISAEYTPNAEGQAEATADPLYD) is disordered.

Belongs to the Hfq family. Homohexamer.

RNA chaperone that binds small regulatory RNA (sRNAs) and mRNAs to facilitate mRNA translational regulation in response to envelope stress, environmental stress and changes in metabolite concentrations. Also binds with high specificity to tRNAs. This chain is RNA-binding protein Hfq, found in Dichelobacter nodosus (strain VCS1703A).